A 397-amino-acid chain; its full sequence is P2X purinoceptor 3 (397 aa).

At 1 to 20 the chain is on the cytoplasmic side; that stretch reads MNCISDFFTYETTKSVVVKS. A helical transmembrane segment spans residues 21 to 43; the sequence is WTIGIINRAVQLLIISYFVGWVF. Topologically, residues 44-322 are extracellular; that stretch reads LHEKAYQVRD…AGKFNIIPTI (279 aa). Residues Lys63 and Lys65 each coordinate ATP. 3 disulfide bridges follow: Cys107–Cys153, Cys116–Cys137, and Cys122–Cys147. Glu111 contributes to the Mg(2+) binding site. Asn139 carries an N-linked (GlcNAc...) asparagine glycan. Asp158 contacts Mg(2+). A Ca(2+)-binding site is contributed by Asp158. Asn170 is a glycosylation site (N-linked (GlcNAc...) asparagine). An ATP-binding site is contributed by Thr172. An N-linked (GlcNAc...) asparagine glycan is attached at Asn194. 2 cysteine pairs are disulfide-bonded: Cys203–Cys213 and Cys247–Cys256. 3 residues coordinate ATP: Ser275, Asn279, and Arg281. Residue Asn290 is glycosylated (N-linked (GlcNAc...) asparagine). Lys299 contacts ATP. The helical transmembrane segment at 323-341 threads the bilayer; the sequence is ISSVAAFTSVGVGTVLCDI. Over 342 to 397 the chain is Cytoplasmic; the sequence is ILLNFLKGADHYKARKFEEVTETTLKGTASTNPVFTSDQATVEKQSTDSGAYSIGH.

This sequence belongs to the P2X receptor family. In terms of assembly, homotrimer. Forms heterotrimer with P2RX2. Heterotrimeric P2RX2/3 has a ligand dose-response profile that is distinct from either homotrimeric P2RX2 or P2RX3.

The protein resides in the cell membrane. It carries out the reaction Ca(2+)(in) = Ca(2+)(out). It catalyses the reaction Na(+)(in) = Na(+)(out). Has high sensitivity to ATP. Fast activation by external ATP. Exhibits rapid desensitization. Sensitives to the ATP agonist:alpha/beta-methylene-ATP. Subject to allosteric inhibition by AF-219. Mg(2+) and Ca(2+) slow deactivation of P2RX3. In terms of biological role, extracellular ATP-activated non-selective cation channel. Plays particularly important role in sensory neurons where its activation is critical for gustatory, nociceptive responses, visceral reflexes and sensory hypersensitization. This Mus musculus (Mouse) protein is P2X purinoceptor 3 (P2rx3).